A 475-amino-acid polypeptide reads, in one-letter code: Zinc finger protein 296 (475 aa).

A disordered region spans residues 1-78; sequence MSRRKAGSAP…SPGPMPAGAA (78 aa). K35 participates in a covalent cross-link: Glycyl lysine isopeptide (Lys-Gly) (interchain with G-Cter in SUMO2). C2H2-type zinc fingers lie at residues 157 to 180, 231 to 253, and 259 to 281; these read LSCL…QWDH, PTCP…MRSH, and YACD…KKTH. A disordered region spans residues 275-385; the sequence is NRHKKTHRQV…KSGGKSRGPG (111 aa). 2 stretches are compositionally biased toward low complexity: residues 295 to 313 and 326 to 338; these read SQEQ…AAAP and GAAA…EPGA. The span at 339 to 351 shows a compositional bias: gly residues; sequence PGSGAQAGPGGDT. Over residues 354–367 the composition is skewed to polar residues; that stretch reads AITTEQRTDPANSQ. 3 consecutive C2H2-type zinc fingers follow at residues 386–408, 414–436, and 445–468; these read GSCE…RRSH, YTCE…RRMH, and FECP…RQKH.

It belongs to the krueppel C2H2-type zinc-finger protein family. As to quaternary structure, interacts with KLF4.

It is found in the nucleus. May be a transcriptional corepressor with KLF4. The protein is Zinc finger protein 296 (ZNF296) of Homo sapiens (Human).